Consider the following 237-residue polypeptide: Ribosomal RNA small subunit methyltransferase G (237 aa).

S-adenosyl-L-methionine contacts are provided by residues Gly78, Phe83, 129-130, and Arg148; that span reads AE.

The protein belongs to the methyltransferase superfamily. RNA methyltransferase RsmG family.

It localises to the cytoplasm. In terms of biological role, specifically methylates the N7 position of a guanine in 16S rRNA. The chain is Ribosomal RNA small subunit methyltransferase G from Streptococcus pyogenes serotype M12 (strain MGAS9429).